The primary structure comprises 790 residues: Lon protease 2 (790 aa).

A Lon N-terminal domain is found at L18 to L210. G362 to T369 serves as a coordination point for ATP. One can recognise a Lon proteolytic domain in the interval S598–P779. Residues S685 and K728 contribute to the active site.

Belongs to the peptidase S16 family. As to quaternary structure, homohexamer. Organized in a ring with a central cavity.

It is found in the cytoplasm. It carries out the reaction Hydrolysis of proteins in presence of ATP.. In terms of biological role, ATP-dependent serine protease that mediates the selective degradation of mutant and abnormal proteins as well as certain short-lived regulatory proteins. Required for cellular homeostasis and for survival from DNA damage and developmental changes induced by stress. Degrades polypeptides processively to yield small peptide fragments that are 5 to 10 amino acids long. Binds to DNA in a double-stranded, site-specific manner. This is Lon protease 2 from Syntrophobacter fumaroxidans (strain DSM 10017 / MPOB).